A 675-amino-acid chain; its full sequence is Heat shock 70 kDa protein, mitochondrial (675 aa).

The N-terminal 51 residues, 1-51, are a transit peptide targeting the mitochondrion; it reads MAAVLRSLRRRDVASATFSAYRSLTGSTKPAYVAQKWSCLARPFSSRPAGN. The segment at 638–675 is disordered; it reads VSKIGEHMSGGSSGGSSAGGSQGGGDQAPEAEYEEVKK. Residues 648 to 663 show a composition bias toward gly residues; sequence GSSGGSSAGGSQGGGD. Residues 666 to 675 show a composition bias toward acidic residues; the sequence is PEAEYEEVKK.

This sequence belongs to the heat shock protein 70 family.

The protein resides in the mitochondrion. The protein is Heat shock 70 kDa protein, mitochondrial of Phaseolus vulgaris (Kidney bean).